We begin with the raw amino-acid sequence, 299 residues long: 4-diphosphocytidyl-2-C-methyl-D-erythritol kinase (299 aa).

The active site involves Lys33. An ATP-binding site is contributed by 115–125 (PLASGLGGGSS). Asp154 is a catalytic residue.

The protein belongs to the GHMP kinase family. IspE subfamily.

The enzyme catalyses 4-CDP-2-C-methyl-D-erythritol + ATP = 4-CDP-2-C-methyl-D-erythritol 2-phosphate + ADP + H(+). It functions in the pathway isoprenoid biosynthesis; isopentenyl diphosphate biosynthesis via DXP pathway; isopentenyl diphosphate from 1-deoxy-D-xylulose 5-phosphate: step 3/6. In terms of biological role, catalyzes the phosphorylation of the position 2 hydroxy group of 4-diphosphocytidyl-2C-methyl-D-erythritol. The protein is 4-diphosphocytidyl-2-C-methyl-D-erythritol kinase of Deinococcus geothermalis (strain DSM 11300 / CIP 105573 / AG-3a).